The primary structure comprises 311 residues: Systemic RNA interference defective protein 2 (311 aa).

The N-terminal stretch at 1 to 20 (MPRFVYFCFALIALLPISWT) is a signal peptide. Residues 21-188 (MDGILITDVE…EETKTVVNKN (168 aa)) lie on the Extracellular side of the membrane. The helical transmembrane segment at 189 to 209 (GGAVAVAVIEGIALIAILAFL) threads the bilayer. The Cytoplasmic segment spans residues 210–311 (GYRTMVNHKL…NDPFATLESW (102 aa)). The span at 287 to 301 (NSSAAQPSTTSNGQF) shows a compositional bias: polar residues. The tract at residues 287–311 (NSSAAQPSTTSNGQFNDPFATLESW) is disordered.

In terms of tissue distribution, expressed in the intestinal lumen. Also present, at lower levels, in the excretory duct cells.

The protein localises to the apical cell membrane. It is found in the cytoplasm. Plays a role in RNA-mediated gene silencing by mediating endocytic uptake of double-stranded RNA (dsRNA) ingested from the environment into intestinal cells from the intestinal lumen. Selective for dsRNAs of at least 50 bp. Required for avoidance behavior induced by small RNAs derived from pathogenic bacteria such as P.aeruginosa. This Caenorhabditis elegans protein is Systemic RNA interference defective protein 2.